A 313-amino-acid polypeptide reads, in one-letter code: Glyoxylate/hydroxypyruvate reductase A (313 aa).

Arg-228 is an active-site residue. Residue His-276 is the Proton donor of the active site.

The protein belongs to the D-isomer specific 2-hydroxyacid dehydrogenase family. GhrA subfamily.

The protein resides in the cytoplasm. The enzyme catalyses glycolate + NADP(+) = glyoxylate + NADPH + H(+). It carries out the reaction (R)-glycerate + NAD(+) = 3-hydroxypyruvate + NADH + H(+). It catalyses the reaction (R)-glycerate + NADP(+) = 3-hydroxypyruvate + NADPH + H(+). Functionally, catalyzes the NADPH-dependent reduction of glyoxylate and hydroxypyruvate into glycolate and glycerate, respectively. This Serratia proteamaculans (strain 568) protein is Glyoxylate/hydroxypyruvate reductase A.